Consider the following 491-residue polypeptide: Probable glycine dehydrogenase (decarboxylating) subunit 2 (491 aa).

Lys273 is subject to N6-(pyridoxal phosphate)lysine.

It belongs to the GcvP family. C-terminal subunit subfamily. In terms of assembly, the glycine cleavage system is composed of four proteins: P, T, L and H. In this organism, the P 'protein' is a heterodimer of two subunits. Requires pyridoxal 5'-phosphate as cofactor.

The enzyme catalyses N(6)-[(R)-lipoyl]-L-lysyl-[glycine-cleavage complex H protein] + glycine + H(+) = N(6)-[(R)-S(8)-aminomethyldihydrolipoyl]-L-lysyl-[glycine-cleavage complex H protein] + CO2. The glycine cleavage system catalyzes the degradation of glycine. The P protein binds the alpha-amino group of glycine through its pyridoxal phosphate cofactor; CO(2) is released and the remaining methylamine moiety is then transferred to the lipoamide cofactor of the H protein. The polypeptide is Probable glycine dehydrogenase (decarboxylating) subunit 2 (Bacillus cereus (strain ATCC 10987 / NRS 248)).